We begin with the raw amino-acid sequence, 239 residues long: Ribonuclease 3 (239 aa).

Positions 11 to 133 (HAAIQKKLGY…MFAAVSFDAD (123 aa)) constitute an RNase III domain. Mg(2+) is bound at residue glutamate 46. Aspartate 50 is a catalytic residue. Mg(2+) contacts are provided by aspartate 119 and glutamate 122. Residue glutamate 122 is part of the active site. The DRBM domain occupies 160-230 (DGKTALQEAL…AKEALKWLEE (71 aa)).

It belongs to the ribonuclease III family. Homodimer. Mg(2+) is required as a cofactor.

The protein localises to the cytoplasm. It carries out the reaction Endonucleolytic cleavage to 5'-phosphomonoester.. Digests double-stranded RNA. Involved in the processing of primary rRNA transcript to yield the immediate precursors to the large and small rRNAs (23S and 16S). Also processes some mRNAs, and tRNAs when they are encoded in the rRNA operon. Its function is as follows. CRISPR (clustered regularly interspaced short palindromic repeat) is an adaptive immune system that provides protection against mobile genetic elements (viruses, transposable elements and conjugative plasmids). CRISPR clusters contain spacers, sequences complementary to antecedent mobile elements, and target invading nucleic acids. CRISPR clusters are transcribed and processed into CRISPR RNA (crRNA). In this organism endogenous ribonuclease 3 and Cas9 are required for correct coprocessing of pre-crRNA and the trans-encoded small RNA (tracrRNA). Cas9, crRNA and tracrRNA are required for cleavage of invading DNA. Complements pre-crRNA and tracrRNA coprocessing defects in an rnc deletion in S.pyogenes strain 370. The protein is Ribonuclease 3 of Neisseria meningitidis serogroup A / serotype 4A (strain DSM 15465 / Z2491).